The primary structure comprises 424 residues: MTATEINFDGLIGPMHNYAGLSPGNIASATNAGAISQPRAAALQGLAKMKRLMDRGLVQGFIPPPRRPAVAALRALGFGGDDRSVIARAAAEDPVLFNNACSASAMWAANAATVIAAPDSGDGRVHLVTANLATMLHRSFEAPDTFATLRTIFADQRHFAVHPALPGTQHFSDEGAANHMRITPRHGERGLDIFVHGAARGSRFPERQAKRAGEAVARLAGADAFHTLQSQAAIEAGAFHNDVVAVANEHVLLAHAAAFEDRDGLFAAAGRAVPDFVAVEVDSIGLDDAISSYLFNSQLLTLPEGGMALVLPSETRENPRVWAAVETILAGNNPINEAIVVDVRESMRNGGGPACLRLRVPVGEEALRAIDPRFLLDERRWEALCALVERHWPERIDAAELADPALWAAAGAAHDALDTLLARV.

Substrate is bound by residues 19–28 (AGLSPGNIAS), asparagine 110, and 137–138 (HR). Residue glutamate 174 is part of the active site. Substrate is bound at residue arginine 207. Histidine 240 is a catalytic residue. Positions 242 and 349 each coordinate substrate. Cysteine 355 acts as the Nucleophile in catalysis.

It belongs to the succinylarginine dihydrolase family. As to quaternary structure, homodimer.

The enzyme catalyses N(2)-succinyl-L-arginine + 2 H2O + 2 H(+) = N(2)-succinyl-L-ornithine + 2 NH4(+) + CO2. It functions in the pathway amino-acid degradation; L-arginine degradation via AST pathway; L-glutamate and succinate from L-arginine: step 2/5. Its function is as follows. Catalyzes the hydrolysis of N(2)-succinylarginine into N(2)-succinylornithine, ammonia and CO(2). The chain is N-succinylarginine dihydrolase from Rhizorhabdus wittichii (strain DSM 6014 / CCUG 31198 / JCM 15750 / NBRC 105917 / EY 4224 / RW1) (Sphingomonas wittichii).